The primary structure comprises 432 residues: Tol-Pal system protein TolB (432 aa).

Positions 1–21 (MSTLIRIALFALALMAGAAQA) are cleaved as a signal peptide.

The protein belongs to the TolB family. The Tol-Pal system is composed of five core proteins: the inner membrane proteins TolA, TolQ and TolR, the periplasmic protein TolB and the outer membrane protein Pal. They form a network linking the inner and outer membranes and the peptidoglycan layer.

It localises to the periplasm. Part of the Tol-Pal system, which plays a role in outer membrane invagination during cell division and is important for maintaining outer membrane integrity. The sequence is that of Tol-Pal system protein TolB from Pseudomonas aeruginosa (strain ATCC 15692 / DSM 22644 / CIP 104116 / JCM 14847 / LMG 12228 / 1C / PRS 101 / PAO1).